We begin with the raw amino-acid sequence, 715 residues long: uncharacterized protein (715 aa).

4 disordered regions span residues 192–216 (ASSV…SVTA), 300–348 (NEEV…TSKR), 461–481 (ASSS…RSNE), and 580–630 (FTVS…KPPK). Residues 202 to 213 (NNTSPYPPSNSS) are compositionally biased toward low complexity. Polar residues-rich tracts occupy residues 301-326 (EEVS…NKND) and 472-481 (HLGTSLRSNE). Over residues 601 to 614 (TDSSPSDTISSSPT) the composition is skewed to low complexity.

This is an uncharacterized protein from Schizosaccharomyces pombe (strain 972 / ATCC 24843) (Fission yeast).